Reading from the N-terminus, the 812-residue chain is Zn(2)-C6 fungal-type transcription factor pigI (812 aa).

A disordered region spans residues 42-74; sequence GCLHPRSPPRDRTAMADNSNSSPPASRRREKPQ. The segment at residues 77-105 is a DNA-binding region (zn(2)-C6 fungal-type); it reads CTLCRRRKLRCDRRQPCETCVRRGLSLSC.

It localises to the nucleus. In terms of biological role, zn(2)-C6 fungal-type transcription factor; part of the gene cluster that mediates the biosynthesis of azaphilone pigments (MonAzPs), a complex mixture of compounds with a common azaphilone skeleton very widely used as food colorants. Acts probably as a negative regulator of the azaphilone pigments (MonAzPs) gene cluster. The protein is Zn(2)-C6 fungal-type transcription factor pigI of Monascus ruber (Mold).